The primary structure comprises 408 residues: Argininosuccinate synthase (408 aa).

Residues 10-18 and Ala-37 contribute to the ATP site; that span reads AYSGGLDTS. L-citrulline-binding residues include Tyr-90 and Ser-95. Gly-120 contributes to the ATP binding site. L-aspartate contacts are provided by Thr-122, Asn-126, and Asp-127. Asn-126 serves as a coordination point for L-citrulline. Arg-130, Ser-182, Ser-191, Glu-267, and Tyr-279 together coordinate L-citrulline.

This sequence belongs to the argininosuccinate synthase family. Type 1 subfamily. In terms of assembly, homotetramer.

The protein localises to the cytoplasm. It carries out the reaction L-citrulline + L-aspartate + ATP = 2-(N(omega)-L-arginino)succinate + AMP + diphosphate + H(+). It participates in amino-acid biosynthesis; L-arginine biosynthesis; L-arginine from L-ornithine and carbamoyl phosphate: step 2/3. This is Argininosuccinate synthase from Paraburkholderia phytofirmans (strain DSM 17436 / LMG 22146 / PsJN) (Burkholderia phytofirmans).